A 191-amino-acid polypeptide reads, in one-letter code: Gene BABR protein 1 (191 aa).

The sequence is that of Gene BABR protein 1 from Babesia bovis.